A 1075-amino-acid polypeptide reads, in one-letter code: Ataxin-2-like protein (1075 aa).

Position 1 is an N-acetylmethionine (Met-1). Residues 1 to 12 (MLKPQPLQQPSQ) are compositionally biased toward low complexity. Residues 1-115 (MLKPQPLQQP…KGPPQSPVFE (115 aa)) are disordered. The interaction with MPL stretch occupies residues 98–121 (SARGQSTGKGPPQSPVFEGVYNNS). Ser-103 and Ser-111 each carry phosphoserine. Tyr-118 is modified (phosphotyrosine). Residues 122-199 (RMLHFLTAVV…VMLVHFRNVD (78 aa)) enclose the Sm domain. Lys-207 is subject to N6-acetyllysine. The residue at position 238 (Ser-238) is a Phosphoserine. Tyr-264 bears the Phosphotyrosine mark. Ser-306 carries the phosphoserine modification. Position 309 is a phosphotyrosine (Tyr-309). A compositionally biased stretch (basic and acidic residues) spans 316–328 (ENDDGRTEEEKHS). 6 disordered regions span residues 316-521 (ENDD…LEPQ), 551-697 (QFKL…SIPV), 733-770 (VSNS…MMQA), 820-849 (SNPR…EQPT), 865-940 (ATQL…SSFP), and 1022-1045 (PYIG…ADDR). Residues 330-342 (VQRQGSGRESPSL) show a composition bias toward polar residues. Ser-335 and Ser-339 each carry phosphoserine. Lys-348 is covalently cross-linked (Glycyl lysine isopeptide (Lys-Gly) (interchain with G-Cter in SUMO2)). The residue at position 349 (Tyr-349) is a Phosphotyrosine. Arg-361 carries the post-translational modification Asymmetric dimethylarginine. Residues 363-380 (GVRCSSSRGGRPGLSSLP) show a composition bias toward low complexity. Residues Ser-391 and Ser-409 each carry the phosphoserine modification. The segment covering 421–433 (TLSSPSNRPSGET) has biased composition (polar residues). Position 449 is a phosphoserine (Ser-449). Low complexity-rich tracts occupy residues 450-462 (PKSA…SASC) and 471-485 (VPTS…SSVS). Ser-493 and Ser-496 each carry phosphoserine. Positions 505-516 (DVKELSTKEPGR) are enriched in basic and acidic residues. A phosphoserine mark is found at Ser-557, Ser-558, Ser-559, and Ser-563. The segment covering 571 to 584 (ILKEEPKGKEKEVD) has biased composition (basic and acidic residues). Ser-594 bears the Phosphoserine mark. Phosphothreonine is present on Thr-632. 4 positions are modified to phosphoserine: Ser-634, Ser-674, Ser-680, and Ser-684. Low complexity-rich tracts occupy residues 678–694 (STST…STPS) and 761–770 (PASAPPMMQA). A compositionally biased stretch (polar residues) spans 874–898 (QPATTPTGSQPQSQHAAPSPVQHQA). 2 stretches are compositionally biased toward low complexity: residues 931–940 (SAQSPQSSFP) and 1025–1037 (GHPQ…QAPG).

This sequence belongs to the ataxin-2 family. Interacts with MPL/TPOR and EPOR and dissociates after ligand stimulation. Interacts with DDX6, G3BP1, and ATXN2. Interacts with PRMT1. Interacts with CIC and ATXN1. In terms of processing, thrombopoietin triggers the phosphorylation on tyrosine residues in a way that is dependent on MPL C-terminal domain. Post-translationally, asymmetrically dimethylated. Probably methylated by PRMT1. Expressed at high levels in thymus, lymph node, spleen, fetal kidney and adult testis. Constitutively associated with MPL and EPOR in hematopoietic cells.

The protein localises to the membrane. It is found in the cytoplasm. Its subcellular location is the nucleus speckle. The protein resides in the cytoplasmic granule. Involved in the regulation of stress granule and P-body formation. The polypeptide is Ataxin-2-like protein (ATXN2L) (Homo sapiens (Human)).